The following is a 620-amino-acid chain: Chaperone protein HscA homolog (620 aa).

It belongs to the heat shock protein 70 family.

Its function is as follows. Chaperone involved in the maturation of iron-sulfur cluster-containing proteins. Has a low intrinsic ATPase activity which is markedly stimulated by HscB. The protein is Chaperone protein HscA homolog of Acinetobacter baumannii (strain SDF).